A 448-amino-acid chain; its full sequence is Glutamyl-tRNA reductase (448 aa).

Substrate contacts are provided by residues 49-52, Ser109, 114-116, and Gln120; these read TCNR and ETQ. Cys50 (nucleophile) is an active-site residue. Position 189–194 (189–194) interacts with NADP(+); that stretch reads GAGETG. Residues 427–448 form a disordered region; that stretch reads PVDEVEETDATSAKAPLRALMR.

This sequence belongs to the glutamyl-tRNA reductase family. In terms of assembly, homodimer.

It carries out the reaction (S)-4-amino-5-oxopentanoate + tRNA(Glu) + NADP(+) = L-glutamyl-tRNA(Glu) + NADPH + H(+). It functions in the pathway porphyrin-containing compound metabolism; protoporphyrin-IX biosynthesis; 5-aminolevulinate from L-glutamyl-tRNA(Glu): step 1/2. In terms of biological role, catalyzes the NADPH-dependent reduction of glutamyl-tRNA(Glu) to glutamate 1-semialdehyde (GSA). The chain is Glutamyl-tRNA reductase from Exiguobacterium sp. (strain ATCC BAA-1283 / AT1b).